A 405-amino-acid chain; its full sequence is Probable tRNA sulfurtransferase (405 aa).

The THUMP domain occupies 60–165 (ETIDQRLKLV…QDAIYISNQL (106 aa)). ATP-binding positions include 183 to 184 (ML), 208 to 209 (HF), Arg-265, Gly-287, and Gln-296.

This sequence belongs to the ThiI family.

The protein resides in the cytoplasm. It catalyses the reaction [ThiI sulfur-carrier protein]-S-sulfanyl-L-cysteine + a uridine in tRNA + 2 reduced [2Fe-2S]-[ferredoxin] + ATP + H(+) = [ThiI sulfur-carrier protein]-L-cysteine + a 4-thiouridine in tRNA + 2 oxidized [2Fe-2S]-[ferredoxin] + AMP + diphosphate. The enzyme catalyses [ThiS sulfur-carrier protein]-C-terminal Gly-Gly-AMP + S-sulfanyl-L-cysteinyl-[cysteine desulfurase] + AH2 = [ThiS sulfur-carrier protein]-C-terminal-Gly-aminoethanethioate + L-cysteinyl-[cysteine desulfurase] + A + AMP + 2 H(+). It participates in cofactor biosynthesis; thiamine diphosphate biosynthesis. In terms of biological role, catalyzes the ATP-dependent transfer of a sulfur to tRNA to produce 4-thiouridine in position 8 of tRNAs, which functions as a near-UV photosensor. Also catalyzes the transfer of sulfur to the sulfur carrier protein ThiS, forming ThiS-thiocarboxylate. This is a step in the synthesis of thiazole, in the thiamine biosynthesis pathway. The sulfur is donated as persulfide by IscS. This Lactobacillus johnsonii (strain CNCM I-12250 / La1 / NCC 533) protein is Probable tRNA sulfurtransferase.